Consider the following 827-residue polypeptide: Lon protease (827 aa).

Residues 1–27 (MNDETLREQTTAESEETSPTTPSPEPE) form a disordered region. One can recognise a Lon N-terminal domain in the interval 32-225 (LPLIPLEGAV…KVLMFYRKQF (194 aa)). 385 to 392 (GPPGVGKT) contacts ATP. Positions 625 to 806 (IDQPGVAIGL…DEVLSIALLP (182 aa)) constitute a Lon proteolytic domain. Catalysis depends on residues serine 712 and lysine 755.

Belongs to the peptidase S16 family. As to quaternary structure, homohexamer. Organized in a ring with a central cavity.

It is found in the cytoplasm. The catalysed reaction is Hydrolysis of proteins in presence of ATP.. Functionally, ATP-dependent serine protease that mediates the selective degradation of mutant and abnormal proteins as well as certain short-lived regulatory proteins. Required for cellular homeostasis and for survival from DNA damage and developmental changes induced by stress. Degrades polypeptides processively to yield small peptide fragments that are 5 to 10 amino acids long. Binds to DNA in a double-stranded, site-specific manner. This Chloroflexus aurantiacus (strain ATCC 29366 / DSM 635 / J-10-fl) protein is Lon protease.